A 584-amino-acid polypeptide reads, in one-letter code: Galectin-3-binding protein (584 aa).

An N-terminal signal peptide occupies residues 1 to 18; the sequence is MTPPRLFWVWLLVAGTQG. One can recognise an SRCR domain in the interval 24-124; sequence MRLADGGATN…HERDAGVVCT (101 aa). Intrachain disulfides connect C49-C113, C62-C123, and C93-C103. N-linked (GlcNAc...) asparagine glycosylation is present at N69. N125 and N192 each carry an N-linked (GlcNAc...) asparagine glycan. The region spanning 153–221 is the BTB domain; sequence CDLSISVNVQ…FYSRRIDITL (69 aa). In terms of domain architecture, BACK spans 260–359; it reads PLDLYAYAVA…MLPEELFELQ (100 aa). Residues N361, N397, N550, and N579 are each glycosylated (N-linked (GlcNAc...) asparagine).

Homodimers and homomultimers. The multimers form ring-like structures with a diameter of 30-40 nm. Binds LGALS1 and LGALS3. Binds ITGB1, COL4A1, COL5A1, COL6A1, FN1 and NID. Interacts with the gamma-tubulin ring complex (gamma-TuRC), composed of gamma-tubulin, TUBGCP2, TUBGCP3, TUBGCP4, TUBGCP5 and TUBGCP6. The unglycosylated form interacts with PDE4DIP; this interaction, which is PDE4DIP isoform-specific, may connect a pericentrosomal complex, made of AKAP9, CDK5RAP2, EB1/MAPRE1 and PDE4DIP, to the gamma-tubulin ring complex (gamma-TuRC) to promote microtubule assembly and acetylation.

It is found in the secreted. The protein localises to the extracellular space. Its subcellular location is the extracellular matrix. Functionally, promotes integrin-mediated cell adhesion. May stimulate host defense against viruses and tumor cells. The polypeptide is Galectin-3-binding protein (LGALS3BP) (Pongo abelii (Sumatran orangutan)).